Reading from the N-terminus, the 255-residue chain is Syntaxin-6 (255 aa).

Serine 2 is modified (N-acetylserine). Serine 2 is modified (phosphoserine). Residues 2–168 (SMEDPFFVVK…QAQQQLIVEQ (167 aa)) are required for interaction with VPS51. Residues 2 to 234 (SMEDPFFVVK…VSHMTSDRRQ (233 aa)) lie on the Cytoplasmic side of the membrane. Residues 41-74 (EEIDWTTNELRNNLRSIEWDLEDLDETISIVEAN) adopt a coiled-coil conformation. Phosphoserine occurs at positions 129 and 152. In terms of domain architecture, t-SNARE coiled-coil homology spans 163 to 225 (QLIVEQQDEQ…DNVMKKLAKV (63 aa)). Residues 235-255 (WCAIAILFAVLVVVLILFLVL) form a helical; Anchor for type IV membrane protein membrane-spanning segment.

Belongs to the syntaxin family. As to quaternary structure, identified in a complex containing STX6, STX12 and VAMP4. This complex also includes VTI1A. Binds EEA1. Interacts with VPS45A and GOPC. Interacts with MARCHF2; the interaction promotes MARCHF2-mediated ubiquitination and degradation of CFTR. Interacts with MARCHF3. Interacts with BLTP3B (via C-terminal coiled-coil domain). Interacts with BAIAP3; this interaction is increased in the presence of calcium. Interacts with VPS13B.

Its subcellular location is the golgi apparatus membrane. It localises to the golgi apparatus. The protein localises to the trans-Golgi network membrane. It is found in the recycling endosome membrane. In terms of biological role, SNARE promoting movement of transport vesicles to target membranes. Targets endosomes to the trans-Golgi network, and may therefore function in retrograde trafficking. Together with SNARE STX12, promotes movement of vesicles from endosomes to the cell membrane, and may therefore function in the endocytic recycling pathway. This chain is Syntaxin-6 (Stx6), found in Mus musculus (Mouse).